We begin with the raw amino-acid sequence, 418 residues long: Serine hydroxymethyltransferase (418 aa).

(6S)-5,6,7,8-tetrahydrofolate contacts are provided by residues Leu-121 and 125–127 (GHL). Lys-230 is subject to N6-(pyridoxal phosphate)lysine. Residue 355-357 (SPF) participates in (6S)-5,6,7,8-tetrahydrofolate binding.

Belongs to the SHMT family. As to quaternary structure, homodimer. Requires pyridoxal 5'-phosphate as cofactor.

It localises to the cytoplasm. It carries out the reaction (6R)-5,10-methylene-5,6,7,8-tetrahydrofolate + glycine + H2O = (6S)-5,6,7,8-tetrahydrofolate + L-serine. The protein operates within one-carbon metabolism; tetrahydrofolate interconversion. It participates in amino-acid biosynthesis; glycine biosynthesis; glycine from L-serine: step 1/1. Catalyzes the reversible interconversion of serine and glycine with tetrahydrofolate (THF) serving as the one-carbon carrier. This reaction serves as the major source of one-carbon groups required for the biosynthesis of purines, thymidylate, methionine, and other important biomolecules. Also exhibits THF-independent aldolase activity toward beta-hydroxyamino acids, producing glycine and aldehydes, via a retro-aldol mechanism. The polypeptide is Serine hydroxymethyltransferase (Streptococcus pyogenes serotype M6 (strain ATCC BAA-946 / MGAS10394)).